A 521-amino-acid chain; its full sequence is MSDLTRLTISQARAKLRGKEITATEITEAYLSAIDRANPALNAYVAVTGDRARDMAKASDARLVKGEGGALEGIPLGIKDLFGTEGVHTQACSHVLDGFKPLYESTVTANLWADGAVMLGKLNMDEFAMGSSNETSYYGPVINPWRRSRLDTVVMPTTHQGDGGFVSAGGTKTQRSLDNAQLVPGGSSGGSATAVSAFLCAGATATDTGGSIRQPAAFTGTVGIKPTYGRCSRWGIVAFASSLDQAGPIARDVRDAAILLKSMASVDPKDTTSVDRPVPDYEAAIGKPIKGMKVGIPKEYRVDGMPEEIEALWQKGIAWLRDAGAEIVDISLPHTKYALPAYYIVAPAEASSNLARYDGVRYGLRVPGKDIVEMYEKTRAAGFGREVKRRIMIGTYVLSAGYYDAYYLQAQKVRNLIKRDFENVFAAGVDVILTPATPSAAFGIADEDMAADPVKMYLNDIFTVTVNMAGLPGIAVPAGLDPKGLPLGLQLIGRPFEEETLFQTAAVIEQAAGTFQPEKWW.

Residues Lys-79 and Ser-187 each act as charge relay system in the active site. Ser-211 serves as the catalytic Acyl-ester intermediate.

It belongs to the amidase family. GatA subfamily. As to quaternary structure, heterotrimer of A, B and C subunits.

The catalysed reaction is L-glutamyl-tRNA(Gln) + L-glutamine + ATP + H2O = L-glutaminyl-tRNA(Gln) + L-glutamate + ADP + phosphate + H(+). Functionally, allows the formation of correctly charged Gln-tRNA(Gln) through the transamidation of misacylated Glu-tRNA(Gln) in organisms which lack glutaminyl-tRNA synthetase. The reaction takes place in the presence of glutamine and ATP through an activated gamma-phospho-Glu-tRNA(Gln). The sequence is that of Glutamyl-tRNA(Gln) amidotransferase subunit A from Mesorhizobium japonicum (strain LMG 29417 / CECT 9101 / MAFF 303099) (Mesorhizobium loti (strain MAFF 303099)).